A 571-amino-acid polypeptide reads, in one-letter code: Membrane protein insertase YidC (571 aa).

The helical transmembrane segment at 4–24 threads the bilayer; it reads TRVFLIFAWLMVAVLLWMEWS. The interval 29-76 is disordered; that stretch reads APTPAPTTTSAPAAAQSVPGATPGSVPNAQVPGAPGQAAVQAQASATP. Composition is skewed to low complexity over residues 34-43 and 57-76; these read PTTTSAPAAA and AQVP…SATP. Helical transmembrane passes span 369-389, 440-460, 483-503, and 518-538; these read LVGN…LVLY, GGCL…WVLV, YFIL…LTPA, and PLVF…YWVV.

It belongs to the OXA1/ALB3/YidC family. Type 1 subfamily. In terms of assembly, interacts with the Sec translocase complex via SecD. Specifically interacts with transmembrane segments of nascent integral membrane proteins during membrane integration.

It is found in the cell inner membrane. Required for the insertion and/or proper folding and/or complex formation of integral membrane proteins into the membrane. Involved in integration of membrane proteins that insert both dependently and independently of the Sec translocase complex, as well as at least some lipoproteins. Aids folding of multispanning membrane proteins. In Stenotrophomonas maltophilia (strain R551-3), this protein is Membrane protein insertase YidC.